A 559-amino-acid polypeptide reads, in one-letter code: Intestinal-type alkaline phosphatase (559 aa).

The first 19 residues, 1 to 19 (MQGPWVLLLLGLRLQLSLS), serve as a signal peptide directing secretion. Asp-61 contributes to the Mg(2+) binding site. The Zn(2+) site is built by Asp-61 and Ser-111. Ser-111 functions as the Phosphoserine intermediate in the catalytic mechanism. An intrachain disulfide couples Cys-140 to Cys-202. Asn-141 carries N-linked (GlcNAc...) asparagine glycosylation. Ser-174 provides a ligand contact to Mg(2+). Glu-235 serves as a coordination point for Ca(2+). Asn-241 carries an N-linked (GlcNAc...) asparagine glycan. The Ca(2+) site is built by Phe-288, Glu-289, and Asp-304. Position 330 (Glu-330) interacts with Mg(2+). The Zn(2+) site is built by Asp-335, His-339, Asp-376, and His-377. N-linked (GlcNAc...) asparagine glycosylation occurs at Asn-426. Residue His-450 participates in Zn(2+) binding. Cys-485 and Cys-492 are joined by a disulfide. The tract at residues 496 to 531 (PPADESQTTTTTRQTTITTTTTTTTTTTTPVHNSAR) is disordered. The span at 503–524 (TTTTTRQTTITTTTTTTTTTTT) shows a compositional bias: low complexity. Asn-528 carries the GPI-anchor amidated asparagine lipid modification. Positions 529–559 (SARSLGPATAPLALALLAGMLMLLLGAPAES) are cleaved as a propeptide — removed in mature form.

This sequence belongs to the alkaline phosphatase family. Homodimer. Mg(2+) serves as cofactor. Zn(2+) is required as a cofactor. It depends on Ca(2+) as a cofactor. As to expression, intestine and thymus.

The protein resides in the cell membrane. The catalysed reaction is a phosphate monoester + H2O = an alcohol + phosphate. Alkaline phosphatase that can hydrolyze various phosphate compounds. This is Intestinal-type alkaline phosphatase (Iap) from Mus musculus (Mouse).